Here is a 180-residue protein sequence, read N- to C-terminus: Ribulose bisphosphate carboxylase small subunit, chloroplastic 3 (180 aa).

The transit peptide at 1 to 56 (MASMISSSAVTTVSRASTVQSAAVAPFGGLKSMTGFPVKKVNTDITSITSNGGRVK) directs the protein to the chloroplast.

The protein belongs to the RuBisCO small chain family. Heterohexadecamer of 8 large and 8 small subunits.

The protein resides in the plastid. It localises to the chloroplast. Its function is as follows. RuBisCO catalyzes two reactions: the carboxylation of D-ribulose 1,5-bisphosphate, the primary event in carbon dioxide fixation, as well as the oxidative fragmentation of the pentose substrate. Both reactions occur simultaneously and in competition at the same active site. Although the small subunit is not catalytic it is essential for maximal activity. Binds to abscisic acid (ABA); only half of the possible binding sites are occupied in the crystal; and there are indications this is a low affinity site. The chain is Ribulose bisphosphate carboxylase small subunit, chloroplastic 3 (RBCS.3A) from Pisum sativum (Garden pea).